A 672-amino-acid chain; its full sequence is Nuclear hormone receptor family member nhr-5 (672 aa).

Over residues 1 to 19 (MSSGGNSSNVNRNSGSSNV) the composition is skewed to low complexity. Residues 1 to 38 (MSSGGNSSNVNRNSGSSNVITLNDSDEETEDSNLGSSS) are disordered. The segment at residues 40–115 (TNLCKVCGAE…EGMNPAYVRP (76 aa)) is a DNA-binding region (nuclear receptor). NR C4-type zinc fingers lie at residues 43 to 63 (CKVC…CVGC) and 79 to 98 (CAAN…CRSC). Positions 155 to 424 (EMRTILMTLL…PLLTDLFGCF (270 aa)) constitute an NR LBD domain. Residues 550–577 (NIQGPSHLPQCGSTVTQRPTVPSSTTSS) form a disordered region. Residues 562–577 (STVTQRPTVPSSTTSS) show a composition bias toward low complexity.

Belongs to the nuclear hormone receptor family.

The protein resides in the nucleus. Functionally, orphan nuclear receptor. The chain is Nuclear hormone receptor family member nhr-5 (nhr-5) from Caenorhabditis elegans.